Reading from the N-terminus, the 157-residue chain is Transcriptional repressor NrdR (157 aa).

Residues 3 to 34 (CPFCGHEDTQVKDSRPTDDGTAIRRRRSCTAC) fold into a zinc finger. The region spanning 49 to 139 (LIVVKTDQRR…VYRNFSDAGD (91 aa)) is the ATP-cone domain.

This sequence belongs to the NrdR family. Requires Zn(2+) as cofactor.

Negatively regulates transcription of bacterial ribonucleotide reductase nrd genes and operons by binding to NrdR-boxes. This Granulibacter bethesdensis (strain ATCC BAA-1260 / CGDNIH1) protein is Transcriptional repressor NrdR.